The following is a 506-amino-acid chain: ATP synthase subunit alpha (506 aa).

170 to 177 (GDRQTGKT) provides a ligand contact to ATP.

It belongs to the ATPase alpha/beta chains family. F-type ATPases have 2 components, CF(1) - the catalytic core - and CF(0) - the membrane proton channel. CF(1) has five subunits: alpha(3), beta(3), gamma(1), delta(1), epsilon(1). CF(0) has four main subunits: a(1), b(1), b'(1) and c(9-12).

It localises to the cellular thylakoid membrane. The catalysed reaction is ATP + H2O + 4 H(+)(in) = ADP + phosphate + 5 H(+)(out). Produces ATP from ADP in the presence of a proton gradient across the membrane. The alpha chain is a regulatory subunit. This Synechococcus sp. (strain JA-3-3Ab) (Cyanobacteria bacterium Yellowstone A-Prime) protein is ATP synthase subunit alpha.